Here is a 450-residue protein sequence, read N- to C-terminus: Phosphopentomutase (450 aa).

Ser93 serves as the catalytic Phosphoserine intermediate. Positions 93, 231, 233, and 235 each coordinate Mg(2+). Ser93 bears the Phosphoserine; by autocatalysis mark.

Belongs to the phosphohexose mutase family. As to quaternary structure, homotetramer. Mg(2+) is required as a cofactor. Post-translationally, activated by phosphorylation.

The enzyme catalyses alpha-D-ribose 1-phosphate = D-ribose 5-phosphate. The catalysed reaction is 2-deoxy-alpha-D-ribose 1-phosphate = 2-deoxy-D-ribose 5-phosphate. Catalyzes the conversion of deoxyribose 1-phosphate to deoxyribose 5-phosphate. Also shows weak activity with glucose 1-phosphate and mannose 1-phosphate. Could be involved in pentose biosynthesis. The polypeptide is Phosphopentomutase (Thermococcus kodakarensis (strain ATCC BAA-918 / JCM 12380 / KOD1) (Pyrococcus kodakaraensis (strain KOD1))).